The primary structure comprises 123 residues: Protein lgg-1 (123 aa).

Residue G116 is the site of Phosphatidylethanolamine amidated glycine attachment. Residues 117–123 (GEVEKKE) constitute a propeptide, removed in mature form.

Belongs to the ATG8 family. Interacts with sepa-1 (via the LIR motifs); the interaction is direct. Interacts with allo-1 (via the LIR motif). Interacts with sqst-1 (via the LIR motifs); the interaction is direct. Both lipidated and unlipidated forms interact with epg-7 (via the LIR motif); the interaction is direct. Interacts with epg-2 (via the LIR motifs); the interaction is direct. Interacts with atg-13; the interaction is direct. Interacts with unc-51 (via the LIR motif); the interaction is direct. Interacts with atg-7; the interaction is direct. Interacts with atg-3. The interaction with atg-7 and atg-3 may be required for the lipidation of lgg-1. Cleaved by atg-4.1 and/or atg-4.2, after Gly-116 to form a thioester bond with 'Cys-523' of atg-7 (E1-like activating enzyme) before being transferred to 'Cys-255' of atg-3 (E2 conjugating enzyme), in order to be amidated with phosphatidylethanolamine. This lipid modification anchors lgg-1 to membranes and can be reversed by atg-4.2, releasing soluble lgg-1. C-terminal cleavage is essential for autophagosome initiation and biogenesis. Lipidation is not essential for autophagy or development but the lipidated form is involved in cargo recognition and autophagosome biogenesis. Lipidation regulates lgg-2-positive autophagosome formation. Expressed in PLML touch receptor neuron and in the ventral nerve cord. Expressed in AIY interneurons.

It is found in the preautophagosomal structure. It localises to the cytoplasmic vesicle. The protein resides in the autophagosome. The protein localises to the autophagosome membrane. Its subcellular location is the lysosome lumen. It is found in the mitochondrion. It localises to the cytoplasm. The protein resides in the phagosome membrane. The protein localises to the cell membrane. Its subcellular location is the cell projection. It is found in the dendrite. It localises to the perikaryon. Its function is as follows. Ubiquitin-like modifier involved in the formation of autophagosomal vacuoles (autophagosomes). When lipidated mediates tethering between adjacent membranes and stimulates membrane fusion during autophagy. Recruits lipidated-lgg-2 to maturing autophagosomes. Acts in the aggrephagy pathway, which is the macroautophagic degradation of ubiquitinated protein aggregates, and preferentially interacts with autophagy proteins and substrates containing LIR motifs to mediate autophagosome formation and protein aggregate degradation. In particular, binds to components of the unc-51-atg-13 complex to regulate autophagosome formation and cargo sequestration. Required for the degradation of specific sepa-1- and sqst-1-containing protein aggregates during embryogenesis. Involved in allophagy, which is an autophagic process in which paternal mitochondria and organelles are degraded during fertilization, and moreover is required for the formation of lgg-2-positive allophagic autophagosomes in embryos. Involved in the clearance of apoptotic cells by promoting the delivery of engulfed apoptotic cells to the lysosome. Plays a role in the distribution and clearance of germ cell specific P-granules from somatic cells. Also plays a role in the autophagy-mediated degradation of ribosomal RNA and ribosomal proteins in lysosomes. Involved in xenophagy, the autophagy-mediated degradation of pathogens and pathogen products, such as toxins. Required for normal survival when exposed to pathogenic bacteria S.typhimurium probably by promoting autophagic degradation of intracellular S.typhimurium. Also plays a role in membrane-pore repair. Plays a role in mitophagy. Essential for dauer development and longevity, including longevity in response to moderate, short-term heat shock, also known as a hormetic heat shock. The sequence is that of Protein lgg-1 from Caenorhabditis elegans.